Here is a 429-residue protein sequence, read N- to C-terminus: Glutamate-1-semialdehyde 2,1-aminomutase (429 aa).

K265 carries the N6-(pyridoxal phosphate)lysine modification.

Belongs to the class-III pyridoxal-phosphate-dependent aminotransferase family. HemL subfamily. As to quaternary structure, homodimer. Pyridoxal 5'-phosphate is required as a cofactor.

The protein localises to the cytoplasm. The enzyme catalyses (S)-4-amino-5-oxopentanoate = 5-aminolevulinate. It functions in the pathway porphyrin-containing compound metabolism; protoporphyrin-IX biosynthesis; 5-aminolevulinate from L-glutamyl-tRNA(Glu): step 2/2. The sequence is that of Glutamate-1-semialdehyde 2,1-aminomutase from Shewanella piezotolerans (strain WP3 / JCM 13877).